The following is a 310-amino-acid chain: Aspartate carbamoyltransferase catalytic subunit (310 aa).

2 residues coordinate carbamoyl phosphate: R58 and T59. Position 86 (K86) interacts with L-aspartate. Residues R108, H136, and Q139 each contribute to the carbamoyl phosphate site. Residues R169 and R222 each coordinate L-aspartate. Carbamoyl phosphate-binding residues include G264 and P265.

It belongs to the aspartate/ornithine carbamoyltransferase superfamily. ATCase family. As to quaternary structure, heterododecamer (2C3:3R2) of six catalytic PyrB chains organized as two trimers (C3), and six regulatory PyrI chains organized as three dimers (R2).

The catalysed reaction is carbamoyl phosphate + L-aspartate = N-carbamoyl-L-aspartate + phosphate + H(+). It functions in the pathway pyrimidine metabolism; UMP biosynthesis via de novo pathway; (S)-dihydroorotate from bicarbonate: step 2/3. Its function is as follows. Catalyzes the condensation of carbamoyl phosphate and aspartate to form carbamoyl aspartate and inorganic phosphate, the committed step in the de novo pyrimidine nucleotide biosynthesis pathway. In Campylobacter fetus subsp. fetus (strain 82-40), this protein is Aspartate carbamoyltransferase catalytic subunit.